The sequence spans 485 residues: Adenosylhomocysteinase (485 aa).

Positions 64, 139, and 205 each coordinate substrate. An NAD(+)-binding site is contributed by 206–208; sequence TTT. Lys-235 and Asp-239 together coordinate substrate. Residues Asn-240, 269–274, Glu-292, Asn-327, 348–350, and Asn-397 contribute to the NAD(+) site; these read GYGDVG and IGH.

This sequence belongs to the adenosylhomocysteinase family. The cofactor is NAD(+).

It catalyses the reaction S-adenosyl-L-homocysteine + H2O = L-homocysteine + adenosine. Its pathway is amino-acid biosynthesis; L-homocysteine biosynthesis; L-homocysteine from S-adenosyl-L-homocysteine: step 1/1. In terms of biological role, adenosylhomocysteine is a competitive inhibitor of S-adenosyl-L-methionine-dependent methyl transferase reactions; therefore adenosylhomocysteinase may play a key role in the control of methylations via regulation of the intracellular concentration of adenosylhomocysteine. The sequence is that of Adenosylhomocysteinase (SAHH) from Medicago sativa (Alfalfa).